Consider the following 93-residue polypeptide: UPF0473 protein RBAM_024480 (93 aa).

It belongs to the UPF0473 family.

This is UPF0473 protein RBAM_024480 from Bacillus velezensis (strain DSM 23117 / BGSC 10A6 / LMG 26770 / FZB42) (Bacillus amyloliquefaciens subsp. plantarum).